Consider the following 464-residue polypeptide: Spore coat protein SP65 (464 aa).

An N-terminal signal peptide occupies residues 1–17 (MKVLLLLVCLVFAYVNA). The Follistatin-like 1 domain maps to 21–43 (ACYNVVCPSNYQCRAEGDQAYCV). N-linked (GlcNAc...) asparagine glycosylation is present at Asn-111. Follistatin-like domains lie at 121-143 (VCRDFQCPVGTHCFNGERGPHCV) and 151-173 (LCRVTKCSYDFTCKMVRGNPTCL). A glycan (N-linked (GlcNAc...) asparagine) is linked at Asn-247. A disordered region spans residues 250 to 320 (STTGATTGAT…STTGAATTAP (71 aa)).

Binds to the C-terminal region of pspB.

The protein resides in the spore wall. Forms a triad with cellulose and pspB that is essential for spore outer layer formation. The polypeptide is Spore coat protein SP65 (cotE) (Dictyostelium discoideum (Social amoeba)).